A 144-amino-acid chain; its full sequence is uncharacterized protein (144 aa).

The span at Pro125–Ser135 shows a compositional bias: polar residues. The interval Pro125–Arg144 is disordered.

This is an uncharacterized protein from Rickettsia prowazekii (strain Madrid E).